The chain runs to 138 residues: Large ribosomal subunit protein uL16 (138 aa).

Belongs to the universal ribosomal protein uL16 family. As to quaternary structure, part of the 50S ribosomal subunit.

Binds 23S rRNA and is also seen to make contacts with the A and possibly P site tRNAs. This is Large ribosomal subunit protein uL16 from Paramagnetospirillum magneticum (strain ATCC 700264 / AMB-1) (Magnetospirillum magneticum).